A 273-amino-acid polypeptide reads, in one-letter code: Ribosomal RNA small subunit methyltransferase A (273 aa).

The S-adenosyl-L-methionine site is built by Asn-18, Leu-20, Gly-45, Glu-66, Asp-91, and Asn-113.

This sequence belongs to the class I-like SAM-binding methyltransferase superfamily. rRNA adenine N(6)-methyltransferase family. RsmA subfamily.

It localises to the cytoplasm. The catalysed reaction is adenosine(1518)/adenosine(1519) in 16S rRNA + 4 S-adenosyl-L-methionine = N(6)-dimethyladenosine(1518)/N(6)-dimethyladenosine(1519) in 16S rRNA + 4 S-adenosyl-L-homocysteine + 4 H(+). Specifically dimethylates two adjacent adenosines (A1518 and A1519) in the loop of a conserved hairpin near the 3'-end of 16S rRNA in the 30S particle. May play a critical role in biogenesis of 30S subunits. The protein is Ribosomal RNA small subunit methyltransferase A of Citrobacter koseri (strain ATCC BAA-895 / CDC 4225-83 / SGSC4696).